A 662-amino-acid chain; its full sequence is Putative cysteine-rich receptor-like protein kinase 16 (662 aa).

The signal sequence occupies residues 1–26 (MIFIMKLKNLLPIFCFFLVSFSISSA). 2 Gnk2-homologous domains span residues 27–131 (QKCG…NRSF) and 137–244 (MTPF…LYQF). Residues 27–277 (QKCGKTGLFK…DDGGKISTRN (251 aa)) lie on the Extracellular side of the membrane. Asparagine 55, asparagine 64, asparagine 106, asparagine 128, asparagine 145, asparagine 152, and asparagine 206 each carry an N-linked (GlcNAc...) asparagine glycan. The chain crosses the membrane as a helical span at residues 278-298 (ILGITVALAFFITVLLVLGYA). Over 299-662 (LSRRRKAYQE…DASITSVDLR (364 aa)) the chain is Cytoplasmic. One can recognise a Protein kinase domain in the interval 335 to 612 (FQKSNKLGHG…VFQMLTNTFL (278 aa)). Residues 341-349 (LGHGGFGEV) and lysine 363 contribute to the ATP site. Residue aspartate 460 is the Proton acceptor of the active site.

This sequence belongs to the protein kinase superfamily. Ser/Thr protein kinase family. CRK subfamily.

Its subcellular location is the membrane. It carries out the reaction L-seryl-[protein] + ATP = O-phospho-L-seryl-[protein] + ADP + H(+). The enzyme catalyses L-threonyl-[protein] + ATP = O-phospho-L-threonyl-[protein] + ADP + H(+). In Arabidopsis thaliana (Mouse-ear cress), this protein is Putative cysteine-rich receptor-like protein kinase 16 (CRK16).